Consider the following 103-residue polypeptide: Large ribosomal subunit protein bL21 (103 aa).

It belongs to the bacterial ribosomal protein bL21 family. As to quaternary structure, part of the 50S ribosomal subunit. Contacts protein L20.

Its function is as follows. This protein binds to 23S rRNA in the presence of protein L20. This chain is Large ribosomal subunit protein bL21, found in Kocuria rhizophila (strain ATCC 9341 / DSM 348 / NBRC 103217 / DC2201).